The chain runs to 158 residues: Protein Smg homolog (158 aa).

The protein belongs to the Smg family.

The chain is Protein Smg homolog from Pseudoalteromonas atlantica (strain T6c / ATCC BAA-1087).